Reading from the N-terminus, the 334-residue chain is Ornithine carbamoyltransferase subunit F (334 aa).

Carbamoyl phosphate is bound by residues 56–59 (STRT), Gln-83, Arg-107, and 134–137 (HPTQ). L-ornithine contacts are provided by residues Asn-168, Asp-232, and 236 to 237 (SM). Residues 274 to 275 (CL) and Arg-320 each bind carbamoyl phosphate.

Belongs to the aspartate/ornithine carbamoyltransferase superfamily. OTCase family. In terms of assembly, in E.coli strain K12, trimer of identical or non-identical chains are composed of ArgI (I) and/or ArgF (F). The trimer has the following composition: FFI, FFF, FII, III. E.coli strains B and W, which are known to contain only ArgI, produce only a trimer of identical chains (III).

It is found in the cytoplasm. The catalysed reaction is carbamoyl phosphate + L-ornithine = L-citrulline + phosphate + H(+). It functions in the pathway amino-acid biosynthesis; L-arginine biosynthesis; L-arginine from L-ornithine and carbamoyl phosphate: step 1/3. Functionally, reversibly catalyzes the transfer of the carbamoyl group from carbamoyl phosphate (CP) to the N(epsilon) atom of ornithine (ORN) to produce L-citrulline, which is a substrate for argininosuccinate synthetase, the enzyme involved in the final step in arginine biosynthesis. The chain is Ornithine carbamoyltransferase subunit F from Escherichia coli (strain K12).